The chain runs to 240 residues: Protein FANTASTIC FOUR 2 (240 aa).

2 disordered regions span residues T89–K124 and L177–L229. One can recognise an FAF domain in the interval N117–L171. The segment covering E184 to E200 has biased composition (acidic residues). Basic residues predominate over residues G207–R216. Basic and acidic residues predominate over residues R217–K226.

Belongs to the fantastic four family. In terms of tissue distribution, expressed in the shoot apex, stamens, carpels and young siliques. Detected in provascular and vascular tissue, and in the center of the vegetative and inflorescence meristems. Expressed in the funiculus. In roots and leaves, predominantly expressed in phloem.

Regulates the size of the shoot meristem by modulating the CLV3-WUS feedback loop. Can repress WUS but is under negative control by CLV3. This chain is Protein FANTASTIC FOUR 2 (FAF2), found in Arabidopsis thaliana (Mouse-ear cress).